Here is a 74-residue protein sequence, read N- to C-terminus: MRITYPSIDKLLSRVDSRYSLSVLAAKRAHELEAGDPPTLEHFKCDKAVGKALEEIAAGKVTVDPAHAEVNLED.

The protein belongs to the RNA polymerase subunit omega family. As to quaternary structure, the RNAP catalytic core consists of 2 alpha, 1 beta, 1 beta' and 1 omega subunit. When a sigma factor is associated with the core the holoenzyme is formed, which can initiate transcription.

It catalyses the reaction RNA(n) + a ribonucleoside 5'-triphosphate = RNA(n+1) + diphosphate. Functionally, promotes RNA polymerase assembly. Latches the N- and C-terminal regions of the beta' subunit thereby facilitating its interaction with the beta and alpha subunits. The protein is DNA-directed RNA polymerase subunit omega of Lactobacillus acidophilus (strain ATCC 700396 / NCK56 / N2 / NCFM).